Here is a 159-residue protein sequence, read N- to C-terminus: Histone H2A (159 aa).

Over residues 1 to 10 (MDSTGTGAGG) the composition is skewed to gly residues. 2 disordered regions span residues 1–31 (MDSTGTGAGGKGKKGAAGRKVGGPRKKSVSR) and 133–159 (KTAEKASSGGSKEAKSPKKAAKSPKKA). 2 stretches are compositionally biased toward basic residues: residues 11–29 (KGKKGAAGRKVGGPRKKSV) and 149–159 (PKKAAKSPKKA). Short sequence motifs (SPKK motif) lie at residues 148-151 (SPKK) and 155-158 (SPKK).

The protein belongs to the histone H2A family. The nucleosome is a histone octamer containing two molecules each of H2A, H2B, H3 and H4 assembled in one H3-H4 heterotetramer and two H2A-H2B heterodimers. The octamer wraps approximately 147 bp of DNA.

It is found in the nucleus. It localises to the chromosome. Functionally, core component of nucleosome. Nucleosomes wrap and compact DNA into chromatin, limiting DNA accessibility to the cellular machineries which require DNA as a template. Histones thereby play a central role in transcription regulation, DNA repair, DNA replication and chromosomal stability. DNA accessibility is regulated via a complex set of post-translational modifications of histones, also called histone code, and nucleosome remodeling. In Zea mays (Maize), this protein is Histone H2A.